Consider the following 221-residue polypeptide: Interleukin-12 subunit alpha (221 aa).

The signal sequence occupies residues 1 to 25 (MCPLRSLLLISTLVLLHHLPHLSLG). Disulfide bonds link C39–C112, C66–C198, and C87–C125. N-linked (GlcNAc...) asparagine glycosylation occurs at N95.

The protein belongs to the IL-6 superfamily. Heterodimer with IL12B; disulfide-linked. This heterodimer is known as interleukin IL-12. Heterodimer with EBI3/IL27B; not disulfide-linked. This heterodimer is known as interleukin IL-35. Interacts with NBR1; this interaction promotes IL-12 secretion.

The protein localises to the secreted. Functionally, heterodimerizes with IL12B to form the IL-12 cytokine or with EBI3/IL27B to form the IL-35 cytokine. IL-12 is primarily produced by professional antigen-presenting cells (APCs) such as B-cells and dendritic cells (DCs) as well as macrophages and granulocytes and regulates T-cell and natural killer-cell responses, induces the production of interferon-gamma (IFN-gamma), favors the differentiation of T-helper 1 (Th1) cells and is an important link between innate resistance and adaptive immunity. Mechanistically, exerts its biological effects through a receptor composed of IL12R1 and IL12R2 subunits. Binding to the receptor results in the rapid tyrosine phosphorylation of a number of cellular substrates including the JAK family kinases TYK2 and JAK2. In turn, recruited STAT4 gets phosphorylated and translocates to the nucleus where it regulates cytokine/growth factor responsive genes. As part of IL-35, plays essential roles in maintaining the immune homeostasis of the liver microenvironment and also functions as an immune-suppressive cytokine. Mediates biological events through unconventional receptors composed of IL12RB2 and gp130/IL6ST heterodimers or homodimers. Signaling requires the transcription factors STAT1 and STAT4, which form a unique heterodimer that binds to distinct DNA sites. In Ovis aries (Sheep), this protein is Interleukin-12 subunit alpha (IL12A).